A 325-amino-acid polypeptide reads, in one-letter code: Lactonase drp35 (325 aa).

Ca(2+)-binding residues include E46, S108, G110, E128, T131, Y133, D136, N183, D234, and S235. D234 functions as the Proton donor in the catalytic mechanism.

It belongs to the SMP-30/CGR1 family. Ca(2+) is required as a cofactor.

It localises to the cytoplasm. Its function is as follows. Exhibits lactonase activity. Acts in cells with perturbed membrane integrity and is possibly related to the membrane homeostasis. The protein is Lactonase drp35 (drp35) of Staphylococcus haemolyticus (strain JCSC1435).